The sequence spans 886 residues: Phosphatidylinositol 3-kinase catalytic subunit type 3 (886 aa).

In terms of domain architecture, C2 PI3K-type spans 35 to 184 (YKAVLEDPML…LAKLTKAHRQ (150 aa)). Residues 283–519 (DHDLKPNAAT…PKTHEMYLNV (237 aa)) form the PIK helical domain. The tract at residues 414-464 (GLEPTKKDSQGPMLESMTTSGINPETDSSQILSNPLPAVSSPAPPSKTKDG) is disordered. Polar residues predominate over residues 429-444 (SMTTSGINPETDSSQI). Over residues 445 to 454 (LSNPLPAVSS) the composition is skewed to low complexity. Positions 604–870 (IPEKATLFKS…LIDDSVNALF (267 aa)) constitute a PI3K/PI4K catalytic domain. Positions 610–616 (LFKSALM) are G-loop. Positions 739–747 (GVGDRHLDN) are catalytic loop. The tract at residues 758 to 779 (HIDFGYILGRDPKPLPPPMKLN) is activation loop.

This sequence belongs to the PI3/PI4-kinase family. In terms of assembly, component of the PI3K (PI3KC3/PI3K-III/class III phosphatidylinositol 3-kinase) complex the core of which is composed of the catalytic subunit pik3c3, the regulatory subunit pik3r4 and becn1 associating with additional regulatory/auxiliary subunits to form alternative complex forms. It depends on Mn(2+) as a cofactor.

It localises to the midbody. The catalysed reaction is a 1,2-diacyl-sn-glycero-3-phospho-(1D-myo-inositol) + ATP = a 1,2-diacyl-sn-glycero-3-phospho-(1D-myo-inositol-3-phosphate) + ADP + H(+). Functionally, catalytic subunit of the PI3K complex that mediates formation of phosphatidylinositol 3-phosphate; different complex forms are believed to play a role in multiple membrane trafficking pathways. Involved in the transport of lysosomal enzyme precursors to lysosomes. Required for transport from early to late endosomes. This chain is Phosphatidylinositol 3-kinase catalytic subunit type 3 (pik3c3), found in Xenopus laevis (African clawed frog).